The chain runs to 283 residues: tRNA pseudouridine synthase A (283 aa).

Catalysis depends on aspartate 52, which acts as the Nucleophile. Tyrosine 148 is a binding site for substrate.

Belongs to the tRNA pseudouridine synthase TruA family. In terms of assembly, homodimer.

It catalyses the reaction uridine(38/39/40) in tRNA = pseudouridine(38/39/40) in tRNA. Functionally, formation of pseudouridine at positions 38, 39 and 40 in the anticodon stem and loop of transfer RNAs. In Orientia tsutsugamushi (strain Ikeda) (Rickettsia tsutsugamushi), this protein is tRNA pseudouridine synthase A.